The sequence spans 105 residues: uncharacterized protein (105 aa).

In terms of domain architecture, Hcy-binding spans 1–101; sequence MMDLGDKINP…KDIQEISAAV (101 aa).

This is an uncharacterized protein from Saccharomyces cerevisiae (strain ATCC 204508 / S288c) (Baker's yeast).